We begin with the raw amino-acid sequence, 80 residues long: Toxin-like peptide AaF1CA1 (80 aa).

The signal sequence occupies residues M1 to G22. Positions V25 to I80 constitute an LCN-type CS-alpha/beta domain. 3 cysteine pairs are disulfide-bonded: C40/C63, C49/C68, and C53/C70.

Belongs to the long (3 C-C) scorpion toxin superfamily. Expressed by the venom gland.

It localises to the secreted. Functionally, probable ion channel inhibitor. The polypeptide is Toxin-like peptide AaF1CA1 (Androctonus australis (Sahara scorpion)).